The chain runs to 329 residues: Thiamine thiazole synthase (329 aa).

Residues Cys86, 107–108, Gly115, and Val180 each bind substrate; that span reads EA. Position 218 is a 2,3-didehydroalanine (Cys) (Cys218). Residues Asp220, His235, Met287, and 297 to 299 contribute to the substrate site; that span reads RMG.

It belongs to the THI4 family. As to quaternary structure, homooctamer. Fe cation serves as cofactor. Post-translationally, during the catalytic reaction, a sulfide is transferred from Cys-218 to a reaction intermediate, generating a dehydroalanine residue.

The protein localises to the cytoplasm. The protein resides in the nucleus. It catalyses the reaction [ADP-thiazole synthase]-L-cysteine + glycine + NAD(+) = [ADP-thiazole synthase]-dehydroalanine + ADP-5-ethyl-4-methylthiazole-2-carboxylate + nicotinamide + 3 H2O + 2 H(+). Involved in biosynthesis of the thiamine precursor thiazole. Catalyzes the conversion of NAD and glycine to adenosine diphosphate 5-(2-hydroxyethyl)-4-methylthiazole-2-carboxylic acid (ADT), an adenylated thiazole intermediate. The reaction includes an iron-dependent sulfide transfer from a conserved cysteine residue of the protein to a thiazole intermediate. The enzyme can only undergo a single turnover, which suggests it is a suicide enzyme. May have additional roles in adaptation to various stress conditions and in DNA damage tolerance. In Phaeosphaeria nodorum (strain SN15 / ATCC MYA-4574 / FGSC 10173) (Glume blotch fungus), this protein is Thiamine thiazole synthase.